A 777-amino-acid chain; its full sequence is MTAISSAPFSADEIAGEGIKPEEYDAIVERLGRHPNKAELGMFGVMWSEHCCYKNSRPLLSQFPTEGLRILVGPGENAGVVDLGDGLHLAFKVESHNHPSAVEPFQGAATGVGGILRDIFTMGARPIAILNSLRFGDLEQPRTRRLFHGVVSGISHYGNCVGVPTVGGEVAFDPAYNGNPLVNAMALGLMETDEIVKAGASGIGNPVLYVGSTTGRDGMGGASFASAELSDESLDDRPAVQVGDPFLEKSLIEACLEAFKTGAVVAAQDMGAAGLTCSTAEMAAKGGVGVELDLDLIPVRESGMVPYEYLLSESQERMLFVAAAGREQELIDIFHRWGLQAVVAGKIIAEPIVRIFWQGAIAAEIPATALSDNTPIYHRQLPDEPPAYAQQAWQWTIDQLPAATEVGCGDRSWNDLLLTLLDSPTIASKRWVYRQYDHQVQNNTVVLPGAADAAVVRLRPQMGAAALKTSNKGVAATTDCNARYCYLQPYEGAKAAVAEAARNLSCVGAEPLAVTDNLNFGSPEKPIGYWQLAEACRGLSEACREFSTPVTGGNVSLYNETLDSDGKPQPIYPTPVVGMVGLVPNLDRVCGQGFQSVGDRLYLLGLPTQAADDRLSLGGSEYLAIAHQTVAGLPPRIDFDLERRVQAVCRLGIHQGWIRSAHDSAEGGLAVAIAESAIAGSLGARVNLGELVGHRPDWLLFAEGGARILVSVDPAHVAVWEAELQAQIPAAWQAIGTVTEADAGLAIAAGNQPLVQLSVDQLQQTWGGAIERRLAKD.

Residue histidine 50 is part of the active site. ATP contacts are provided by tyrosine 53 and lysine 92. Glutamate 94 serves as a coordination point for Mg(2+). Substrate-binding positions include 95 to 98 (SHNH) and arginine 117. Histidine 96 acts as the Proton acceptor in catalysis. Aspartate 118 lines the Mg(2+) pocket. Position 241 (glutamine 241) interacts with substrate. Residue aspartate 269 coordinates Mg(2+). 313 to 315 (ESQ) lines the substrate pocket. 2 residues coordinate ATP: aspartate 516 and glycine 553. Asparagine 554 provides a ligand contact to Mg(2+). Residue serine 556 participates in substrate binding.

The protein belongs to the FGAMS family. In terms of assembly, monomer. Part of the FGAM synthase complex composed of 1 PurL, 1 PurQ and 2 PurS subunits.

It localises to the cytoplasm. The catalysed reaction is N(2)-formyl-N(1)-(5-phospho-beta-D-ribosyl)glycinamide + L-glutamine + ATP + H2O = 2-formamido-N(1)-(5-O-phospho-beta-D-ribosyl)acetamidine + L-glutamate + ADP + phosphate + H(+). It functions in the pathway purine metabolism; IMP biosynthesis via de novo pathway; 5-amino-1-(5-phospho-D-ribosyl)imidazole from N(2)-formyl-N(1)-(5-phospho-D-ribosyl)glycinamide: step 1/2. Functionally, part of the phosphoribosylformylglycinamidine synthase complex involved in the purines biosynthetic pathway. Catalyzes the ATP-dependent conversion of formylglycinamide ribonucleotide (FGAR) and glutamine to yield formylglycinamidine ribonucleotide (FGAM) and glutamate. The FGAM synthase complex is composed of three subunits. PurQ produces an ammonia molecule by converting glutamine to glutamate. PurL transfers the ammonia molecule to FGAR to form FGAM in an ATP-dependent manner. PurS interacts with PurQ and PurL and is thought to assist in the transfer of the ammonia molecule from PurQ to PurL. This chain is Phosphoribosylformylglycinamidine synthase subunit PurL, found in Synechococcus elongatus (strain ATCC 33912 / PCC 7942 / FACHB-805) (Anacystis nidulans R2).